The primary structure comprises 984 residues: Lateral signaling target protein 2 homolog (984 aa).

Disordered stretches follow at residues P308 to E462, Y508 to S527, R539 to S642, and D749 to A900. Low complexity-rich tracts occupy residues T326 to T356, N369 to N380, T387 to A404, and P412 to W433. The span at S434–E462 shows a compositional bias: acidic residues. S544 and S545 each carry phosphoserine. Basic residues predominate over residues R571–R611. Over residues L630–S642 the composition is skewed to low complexity. Polar residues-rich tracts occupy residues A760–L779 and S789–L806. The residue at position 805 (S805) is a Phosphoserine. Composition is skewed to low complexity over residues A811–A869 and P886–P899. The FYVE-type zinc finger occupies D904–V964. C910, C913, C926, C929, C934, C937, C956, and C959 together coordinate Zn(2+).

Belongs to the lst-2 family.

Functionally, negative regulator of epidermal growth factor receptor (EGFR) signaling. The sequence is that of Lateral signaling target protein 2 homolog from Drosophila yakuba (Fruit fly).